The following is an 80-amino-acid chain: Small ribosomal subunit protein uS17 (80 aa).

The protein belongs to the universal ribosomal protein uS17 family. Part of the 30S ribosomal subunit.

In terms of biological role, one of the primary rRNA binding proteins, it binds specifically to the 5'-end of 16S ribosomal RNA. This Microcystis aeruginosa (strain NIES-843 / IAM M-2473) protein is Small ribosomal subunit protein uS17.